A 380-amino-acid polypeptide reads, in one-letter code: Beta sliding clamp (380 aa).

Belongs to the beta sliding clamp family. Forms a ring-shaped head-to-tail homodimer around DNA which binds and tethers DNA polymerases and other proteins to the DNA. The DNA replisome complex has a single clamp-loading complex (3 tau and 1 each of delta, delta', psi and chi subunits) which binds 3 Pol III cores (1 core on the leading strand and 2 on the lagging strand) each with a beta sliding clamp dimer. Additional proteins in the replisome are other copies of gamma, psi and chi, Ssb, DNA helicase and RNA primase.

It localises to the cytoplasm. Its function is as follows. Confers DNA tethering and processivity to DNA polymerases and other proteins. Acts as a clamp, forming a ring around DNA (a reaction catalyzed by the clamp-loading complex) which diffuses in an ATP-independent manner freely and bidirectionally along dsDNA. Initially characterized for its ability to contact the catalytic subunit of DNA polymerase III (Pol III), a complex, multichain enzyme responsible for most of the replicative synthesis in bacteria; Pol III exhibits 3'-5' exonuclease proofreading activity. The beta chain is required for initiation of replication as well as for processivity of DNA replication. The protein is Beta sliding clamp (dnaN) of Mycoplasma genitalium (strain ATCC 33530 / DSM 19775 / NCTC 10195 / G37) (Mycoplasmoides genitalium).